The chain runs to 465 residues: MAIVNGAVGKPQHISDMVDSTKMNGNQSQDTAGRADTPVSNGGQDYLHVFDSRTCNIHHIPVSDGFVRGSDLSTIAAPLKGSSGRMQKLAVLDPGFQHTACKESSITFIDGEKGELRYRGVRIEDLFHDHDFDSTLHLLVWGRLPTKEEKIKFERRMFEVASPPQEVCDVIRKLPKNMDFISMFLTGLSTYMGTDEEMTRSRHQAVMTYHKNLQTTDDAIIRCFSYVSATLATVYCHVKGVELHHPQEGLTLVENFLHMIGMEDPDKKISRTIDRLSINMADHELSCSTAAFLHVASSLTDPMTCLLTAISAASGPLHGGALEVCYQGLELIGSVDNVPAYIAAVKAKKFRLFGYGHRVYKIQDPRAALTKELMEEHREAIDANPLLQIAVEIDRQANTDPYFVERKLKLNADFYGCFIYIALGIPRDMIPGLLTISRMGGLMAHWREAMNNPIKIWRPMQKFKL.

Positions 13-40 (HISDMVDSTKMNGNQSQDTAGRADTPVS) are disordered. The segment covering 21-31 (TKMNGNQSQDT) has biased composition (polar residues). Active-site residues include H357 and D413.

This sequence belongs to the citrate synthase family.

The protein operates within secondary metabolite biosynthesis. Citrate synthase-like protein; part of the gene cluster that mediates the biosynthesis of squalestatin S1 (SQS1, also known as zaragozic acid A), a heavily oxidized fungal polyketide that offers potent cholesterol lowering activity by targeting squalene synthase (SS). SQS1 is composed of a 2,8-dioxobicyclic[3.2.1]octane-3,4,5-tricarboxyclic acid core that is connected to two lipophilic polyketide arms. These initial steps feature the priming of an unusual benzoic acid starter unit onto the highly reducing polyketide synthase pks2, followed by oxaloacetate extension and product release to generate a tricarboxylic acid containing product. The phenylalanine ammonia lyase (PAL) M7 and the acyl-CoA ligase M9 are involved in transforming phenylalanine into benzoyl-CoA. The citrate synthase-like protein R3 is involved in connecting the C-alpha-carbons of the hexaketide chain and oxaloacetate to afford the tricarboxylic acid unit. The potential hydrolytic enzymes, M8 and M10, are in close proximity to pks2 and may participate in product release. On the other side, the tetraketide arm is synthesized by a the squalestatin tetraketide synthase pks1 and enzymatically esterified to the core in the last biosynthetic step, by the acetyltransferase M4. The biosynthesis of the tetraketide must involve 3 rounds of chain extension. After the first and second rounds methyl-transfer occurs, and in all rounds of extension the ketoreductase and dehydratase are active. The enoyl reductase and C-MeT of pks1 are not active in the final round of extension. The acetyltransferase M4 appears to have a broad substrate selectivity for its acyl CoA substrate, allowing the in vitro synthesis of novel squalestatins. The biosynthesis of SQS1 requires several oxidative steps likely performed by oxidoreductases M1, R1 and R2. Finally, in support of the identification of the cluster as being responsible for SQS1 production, the cluster contains a gene encoding a putative squalene synthase (SS) R6, suggesting a likely mechanism for self-resistance. The chain is Citrate synthase-like protein from Phoma sp. (strain ATCC 20986 / MF5453).